A 224-amino-acid polypeptide reads, in one-letter code: Uridylate kinase (224 aa).

Residue 8–12 (KITGK) participates in ATP binding. Gly-43 lines the UMP pocket. Residues Gly-44 and Arg-48 each coordinate ATP. UMP contacts are provided by residues Asp-66 and 114-120 (LIPGQST). 3 residues coordinate ATP: Ser-140, Tyr-146, and Asp-149.

Belongs to the UMP kinase family. Homohexamer.

It localises to the cytoplasm. The enzyme catalyses UMP + ATP = UDP + ADP. It functions in the pathway pyrimidine metabolism; CTP biosynthesis via de novo pathway; UDP from UMP (UMPK route): step 1/1. Inhibited by UTP. Its function is as follows. Catalyzes the reversible phosphorylation of UMP to UDP. This is Uridylate kinase from Staphylothermus marinus (strain ATCC 43588 / DSM 3639 / JCM 9404 / F1).